The chain runs to 188 residues: SAYSvFN domain-containing protein 1 (188 aa).

Residues 1 to 10 show a composition bias toward basic and acidic residues; that stretch reads MEQRLAEFRE. 2 disordered regions span residues 1-43 and 60-80; these read MEQR…ATPK and AIAQ…PEST. Residues 1–100 are Cytoplasmic-facing; that stretch reads MEQRLAEFRE…SFLTNITFLK (100 aa). Low complexity-rich tracts occupy residues 22 to 43 and 60 to 75; these read STSS…ATPK and AIAQ…AGQQ. Residues 86–100 form a middle helical (MH) region; it reads SSCRQSFLTNITFLK. The segment at residues 101–121 is an intramembrane region (helical); that stretch reads VLLWLVLLGLFVELEFGLAYF. At 122 to 188 the chain is on the cytoplasmic side; the sequence is VLSMFYWMYV…RTSPSCSSYP (67 aa).

The protein belongs to the SAYSD1 family. Associates (via N-terminus) with ribosomes. As to expression, enriched in testis; predominantly expressed in round and elongating spermatids.

It localises to the endoplasmic reticulum membrane. It is found in the cytoplasmic vesicle membrane. In terms of biological role, ufmylation 'reader' component of a translocation-associated quality control pathway, a mechanism that takes place when a ribosome has stalled during translation, and which is required to degrade clogged substrates. Specifically recognizes and binds ufmylated ribosomes when a ribosome has stalled, promoting the transport of stalled nascent chain via the TRAPP complex to lysosomes for degradation. The chain is SAYSvFN domain-containing protein 1 from Mus musculus (Mouse).